The chain runs to 207 residues: Superoxide dismutase [Mn] (207 aa).

Mn(2+) is bound by residues H28, H76, D160, and H164.

It belongs to the iron/manganese superoxide dismutase family. In terms of assembly, homotetramer. Requires Mn(2+) as cofactor.

Its subcellular location is the secreted. The enzyme catalyses 2 superoxide + 2 H(+) = H2O2 + O2. In terms of biological role, destroys superoxide anion radicals which are normally produced within the cells and which are toxic to biological systems. The sequence is that of Superoxide dismutase [Mn] (sodA) from Mycolicibacterium smegmatis (Mycobacterium smegmatis).